The primary structure comprises 219 residues: Lipid transferase CIDEB (219 aa).

A Phosphothreonine modification is found at Thr-18. Residues 34–110 (PQRPFRVCDH…VLEQGQSWSP (77 aa)) enclose the CIDE-N domain.

It belongs to the CIDE family. In terms of assembly, interacts with DFFA. Interacts with DFFB; inhibited by DFFB. Interacts with APOB. Interacts with PREB/SEC12; facilitating loading of SCAP-SREBP into COPII vesicles. Highly enriched in the liver.

The protein resides in the lipid droplet. It localises to the endoplasmic reticulum membrane. The protein localises to the golgi apparatus. Its subcellular location is the cytoplasmic vesicle. It is found in the COPI-coated vesicle. Functionally, lipid transferase specifically expressed in hepatocytes, which promotes unilocular lipid droplet formation by mediating lipid droplet fusion. Lipid droplet fusion promotes their enlargement, restricting lipolysis and favoring lipid storage. Localizes on the lipid droplet surface, at focal contact sites between lipid droplets, and mediates atypical lipid droplet fusion by promoting directional net neutral lipid transfer from the smaller to larger lipid droplets. The transfer direction may be driven by the internal pressure difference between the contacting lipid droplet pair. Promotes lipid exchange and lipid droplet fusion in both small and large lipid droplet-containing hepatocytes. In addition to its role in lipid droplet fusion, also involved in cytoplasmic vesicle biogenesis and transport. Required for very-low-density lipoprotein (VLDL) lipidation and maturation. Probably involved in the biogenesis of VLDL transport vesicles by forming a COPII vesicle coat and facilitating the formation of endoplasmic reticulum-derived large vesicles. Also involved in sterol-regulated export of the SCAP-SREBP complex, composed of SCAP, SREBF1/SREBP1 and SREBF2/SREBP2, by promoting loading of SCAP-SREBP into COPII vesicles. May also activate apoptosis. In Mus musculus (Mouse), this protein is Lipid transferase CIDEB.